We begin with the raw amino-acid sequence, 370 residues long: UDP-N-acetylglucosamine--N-acetylmuramyl-(pentapeptide) pyrophosphoryl-undecaprenol N-acetylglucosamine transferase (370 aa).

UDP-N-acetyl-alpha-D-glucosamine-binding positions include 15-17 (TGG), Asn-129, Arg-170, Ser-200, Ile-253, and Gln-298.

Belongs to the glycosyltransferase 28 family. MurG subfamily.

It is found in the cell inner membrane. The catalysed reaction is di-trans,octa-cis-undecaprenyl diphospho-N-acetyl-alpha-D-muramoyl-L-alanyl-D-glutamyl-meso-2,6-diaminopimeloyl-D-alanyl-D-alanine + UDP-N-acetyl-alpha-D-glucosamine = di-trans,octa-cis-undecaprenyl diphospho-[N-acetyl-alpha-D-glucosaminyl-(1-&gt;4)]-N-acetyl-alpha-D-muramoyl-L-alanyl-D-glutamyl-meso-2,6-diaminopimeloyl-D-alanyl-D-alanine + UDP + H(+). Its pathway is cell wall biogenesis; peptidoglycan biosynthesis. In terms of biological role, cell wall formation. Catalyzes the transfer of a GlcNAc subunit on undecaprenyl-pyrophosphoryl-MurNAc-pentapeptide (lipid intermediate I) to form undecaprenyl-pyrophosphoryl-MurNAc-(pentapeptide)GlcNAc (lipid intermediate II). In Salinibacter ruber (strain DSM 13855 / M31), this protein is UDP-N-acetylglucosamine--N-acetylmuramyl-(pentapeptide) pyrophosphoryl-undecaprenol N-acetylglucosamine transferase.